A 312-amino-acid chain; its full sequence is MSVIDQNAIAVGPRISEADVGDYLALLKPRVMSLVIFTALIGLLIAPGHFHPVLAITSLLCIAVGAGASGALNMALEGDIDSLMSRTANRPIPRGRVTRQEALAFGITLSFFSVLTLGILVNWYAGALLAFTIFFYVVIYTLWLKRWTAQNIVIGGAAGALPPVVAWVAATGSIAPEPLLLFLIIFFWTPPHFWALALFRSDDYARAGVPMLPVVAGPDATRLQILLYTILLVAIAAAPWPLGYFDAVYGVVSLALGAGMLWFAIEVFRKRERSQSLRANRKLFAFSILYLFALFATLGLEAVARMIAPLIW.

Transmembrane regions (helical) follow at residues 34-54 (LVIFTALIGLLIAPGHFHPVL), 56-76 (ITSLLCIAVGAGASGALNMAL), 119-139 (ILVNWYAGALLAFTIFFYVVI), 152-172 (IVIGGAAGALPPVVAWVAATG), 179-199 (LLLFLIIFFWTPPHFWALALF), 225-245 (ILLYTILLVAIAAAPWPLGYF), 248-268 (VYGVVSLALGAGMLWFAIEVF), and 283-303 (LFAFSILYLFALFATLGLEAV).

The protein belongs to the UbiA prenyltransferase family. Protoheme IX farnesyltransferase subfamily.

Its subcellular location is the cell inner membrane. The enzyme catalyses heme b + (2E,6E)-farnesyl diphosphate + H2O = Fe(II)-heme o + diphosphate. The protein operates within porphyrin-containing compound metabolism; heme O biosynthesis; heme O from protoheme: step 1/1. Functionally, converts heme B (protoheme IX) to heme O by substitution of the vinyl group on carbon 2 of heme B porphyrin ring with a hydroxyethyl farnesyl side group. The polypeptide is Protoheme IX farnesyltransferase (Bradyrhizobium sp. (strain BTAi1 / ATCC BAA-1182)).